A 361-amino-acid polypeptide reads, in one-letter code: Mitochondrial import receptor subunit TOM40 homolog (361 aa).

Residues Met1–Ser73 are disordered. Residues Pro11–Thr36 show a composition bias toward pro residues. Over residues Leu40–Thr50 the composition is skewed to gly residues. Over residues Gly51 to Ser69 the composition is skewed to low complexity.

This sequence belongs to the Tom40 family. Forms part of the preprotein translocase complex of the outer mitochondrial membrane (TOM complex) which consists of at least 7 different proteins (TOMM5, TOMM6, TOMM7, TOMM20, TOMM22, TOMM40 and TOMM70). Interacts with mitochondrial targeting sequences. Interacts with TIMM29; linking the TIM22 complex to the TOM complex. Forms a complex with BCAP31 (via C-terminus) which mediates the translocation of components of the mitochondrial membrane respiratory chain NADH dehydrogenase (Complex I) from the cytosol to the mitochondria. Interacts (via N-terminus) with CYP1A1 (via mitochondrial targeting signal); this interaction is required for CYP1A1 translocation across the mitochondrial outer membrane.

The protein resides in the mitochondrion outer membrane. Its function is as follows. Channel-forming protein essential for import of protein precursors into mitochondria. Plays a role in the assembly of the mitochondrial membrane respiratory chain NADH dehydrogenase (Complex I) by forming a complex with BCAP31 and mediating the translocation of Complex I components from the cytosol to the mitochondria. This is Mitochondrial import receptor subunit TOM40 homolog (Tomm40) from Mus musculus (Mouse).